A 241-amino-acid polypeptide reads, in one-letter code: Leucyl/phenylalanyl-tRNA--protein transferase (241 aa).

It belongs to the L/F-transferase family.

The protein localises to the cytoplasm. It carries out the reaction N-terminal L-lysyl-[protein] + L-leucyl-tRNA(Leu) = N-terminal L-leucyl-L-lysyl-[protein] + tRNA(Leu) + H(+). It catalyses the reaction N-terminal L-arginyl-[protein] + L-leucyl-tRNA(Leu) = N-terminal L-leucyl-L-arginyl-[protein] + tRNA(Leu) + H(+). The catalysed reaction is L-phenylalanyl-tRNA(Phe) + an N-terminal L-alpha-aminoacyl-[protein] = an N-terminal L-phenylalanyl-L-alpha-aminoacyl-[protein] + tRNA(Phe). Its function is as follows. Functions in the N-end rule pathway of protein degradation where it conjugates Leu, Phe and, less efficiently, Met from aminoacyl-tRNAs to the N-termini of proteins containing an N-terminal arginine or lysine. The chain is Leucyl/phenylalanyl-tRNA--protein transferase from Colwellia psychrerythraea (strain 34H / ATCC BAA-681) (Vibrio psychroerythus).